We begin with the raw amino-acid sequence, 456 residues long: MKIEEVKSTTKTQRIASHSHVKGLGLDESGLAKQAASGLVGQENAREACGVIVELIKSKKMAGRAVLLAGPPGTGKTALALAIAQELGSKVPFCPMVGSEVYSTEIKKTEVLMENFRRAIGLRIKETKEVYEGEVTELTPCETENPMGGYGKTISHVIIGLKTAKGTKQLKLDPSIFESLQKERVEAGDVIYIEANSGAVKRQGRCDTYATEFDLEAEEYVPLPKGDVHKKKEIIQDVTLHDLDVANARPQGGQDILSMMGQLMKPKKTEITDKLRGEINKVVNKYIDQGVAELVPGVLFVDEVHMLDIECFTYLHRALESSIAPIVIFASNRGNCVIRGTEDITSPHGIPLDLLDRVMIIRTMLYTPQEMKQIIKIRAQTEGINISEEALNHLGEIGTKTTLRYSVQLLTPANLLAKINGKDSIEKEHVEEISELFYDAKSSAKILADQQDKYMK.

K2 participates in a covalent cross-link: Glycyl lysine isopeptide (Lys-Gly) (interchain with G-Cter in SUMO2). An ATP-binding site is contributed by 70 to 77 (GPPGTGKT). Residue K225 forms a Glycyl lysine isopeptide (Lys-Gly) (interchain with G-Cter in SUMO1); alternate linkage. Residue K225 forms a Glycyl lysine isopeptide (Lys-Gly) (interchain with G-Cter in SUMO2); alternate linkage. Residue K445 forms a Glycyl lysine isopeptide (Lys-Gly) (interchain with G-Cter in SUMO2) linkage. K453 is subject to N6-acetyllysine.

The protein belongs to the RuvB family. As to quaternary structure, forms homohexameric rings. Can form a dodecamer with RUVBL2 made of two stacked hexameric rings; however, even though RUVBL1 and RUVBL2 are present in equimolar ratio, the oligomeric status of each hexamer is not known. Oligomerization may regulate binding to nucleic acids and conversely, binding to nucleic acids may affect the dodecameric assembly. Interaction of the complex with DHX34 results in conformational changes of the N-terminus of the RUVBL2 subunits, resulting in loss of nucleotide binding ability and ATP hydrolysis of the complex. Interacts with the transcriptional activation domain of MYC. Component of the RNA polymerase II holoenzyme complex. May also act to bridge the LEF1/TCF1-CTNNB1 complex and TBP. Component of the NuA4 histone acetyltransferase complex which contains the catalytic subunit KAT5/TIP60 and the subunits EP400, TRRAP/PAF400, BRD8/SMAP, EPC1, DMAP1/DNMAP1, RUVBL1/TIP49, RUVBL2, ING3, actin, ACTL6A/BAF53A, MORF4L1/MRG15, MORF4L2/MRGX, MRGBP, YEATS4/GAS41, VPS72/YL1 and MEAF6. The NuA4 complex interacts with MYC and the adenovirus E1A protein. RUVBL1 interacts with EP400. Component of a NuA4-related complex which contains EP400, TRRAP/PAF400, SRCAP, BRD8/SMAP, EPC1, DMAP1/DNMAP1, RUVBL1/TIP49, RUVBL2, actin, ACTL6A/BAF53A, VPS72 and YEATS4/GAS41. Component of the BAF53 complex, at least composed of ACTL6A/BAF53A, RUVBL1/TIP49, SMARCA2/BRM, and TRRAP/PAF400. Component of some MLL1/MLL complex, at least composed of the core components KMT2A/MLL1, ASH2L, HCFC1/HCF1, WDR5 and RBBP5, as well as the facultative components BACC1, CHD8, E2F6, HSP70, INO80C, KANSL1, LAS1L, MAX, MCRS1, MGA, MYST1/MOF, PELP1, PHF20, PRP31, RING2, RUVB1/TIP49A, RUVB2/TIP49B, SENP3, TAF1, TAF4, TAF6, TAF7, TAF9 and TEX10. Associates with alpha and gamma tubulins, particularly during metaphase and early anaphase. Interacts with NPAT. Component of the chromatin-remodeling INO80 complex; specifically part of a complex module associated with the helicase ATP-binding and the helicase C-terminal domain of INO80. Interacts with IGHMBP2. Interacts with OFD1. Interacts with HINT1. Component of a complex with USP49 and PSMC5. Component of a SWR1-like complex. Component of the R2TP complex composed at least of RUVBL1, RUVBL2, RPAP3 and PIHD1. Component of the PAQosome complex which is responsible for the biogenesis of several protein complexes and which consists of R2TP complex members RUVBL1, RUVBL2, RPAP3 and PIH1D1, URI complex members PFDN2, PFDN6, PDRG1, UXT and URI1 as well as ASDURF, POLR2E and DNAAF10/WDR92. Interacts with PIH1D1. Interacts with ITFG1. Interacts with WAC; WAC positively regulates MTOR activity by promoting the assembly of the TTT complex composed of TELO2, TTI1 and TTI2 and the RUVBL complex composed of RUVBL1 and RUVBL2 into the TTT-RUVBL complex which leads to the dimerization of the mTORC1 complex and its subsequent activation. The RUVBL1/RUVBL2 complex interacts with ZNHIT1 (via HIT-type zinc finger), ZNHIT3 (via HIT-type zinc finger), ZNHIT6 (via HIT-type zinc finger) and DDX59/ZNHIT5 (via HIT-type zinc finger) in the presence of ADP. Interacts with NOPCHAP1; the interaction is direct and disrupted upon ATP binding. Interacts with SMG1. Interacts with NOP2, NOP56 and NUFIP1.

It is found in the nucleus matrix. Its subcellular location is the nucleus. The protein localises to the nucleoplasm. The protein resides in the cytoplasm. It localises to the membrane. It is found in the cytoskeleton. Its subcellular location is the microtubule organizing center. The protein localises to the centrosome. The protein resides in the dynein axonemal particle. It catalyses the reaction ATP + H2O = ADP + phosphate + H(+). Functionally, possesses single-stranded DNA-stimulated ATPase and ATP-dependent DNA helicase (3' to 5') activity; hexamerization is thought to be critical for ATP hydrolysis and adjacent subunits in the ring-like structure contribute to the ATPase activity. Component of the NuA4 histone acetyltransferase complex which is involved in transcriptional activation of select genes principally by acetylation of nucleosomal histones H4 and H2A. This modification may both alter nucleosome-DNA interactions and promote interaction of the modified histones with other proteins which positively regulate transcription. This complex may be required for the activation of transcriptional programs associated with oncogene and proto-oncogene mediated growth induction, tumor suppressor mediated growth arrest and replicative senescence, apoptosis, and DNA repair. The NuA4 complex ATPase and helicase activities seem to be, at least in part, contributed by the association of RUVBL1 and RUVBL2 with EP400. NuA4 may also play a direct role in DNA repair when recruited to sites of DNA damage. Component of a SWR1-like complex that specifically mediates the removal of histone H2A.Z/H2AZ1 from the nucleosome. Proposed core component of the chromatin remodeling INO80 complex which exhibits DNA- and nucleosome-activated ATPase activity and catalyzes ATP-dependent nucleosome sliding. Plays an essential role in oncogenic transformation by MYC and also modulates transcriptional activation by the LEF1/TCF1-CTNNB1 complex. Essential for cell proliferation. May be able to bind plasminogen at cell surface and enhance plasminogen activation. The chain is RuvB-like 1 (Ruvbl1) from Mus musculus (Mouse).